A 686-amino-acid chain; its full sequence is X-linked interleukin-1 receptor accessory protein-like 2 (686 aa).

Residues 1 to 16 (MKPPFLLALVVCSVVS) form the signal peptide. At 17 to 354 (TNLKMVSKRN…LLRKKDLIYK (338 aa)) the chain is on the extracellular side. In terms of domain architecture, Ig-like C2-type 1 spans 18–132 (NLKMVSKRNS…YCMKVSMSLT (115 aa)). Cysteine 53 and cysteine 116 are oxidised to a cystine. Asparagine 63, asparagine 120, asparagine 136, asparagine 211, and asparagine 328 each carry an N-linked (GlcNAc...) asparagine glycan. Ig-like C2-type domains follow at residues 141 to 232 (CYNS…LKVT) and 239 to 347 (PPKP…VLLR). Intrachain disulfides connect cysteine 162–cysteine 214 and cysteine 265–cysteine 331. Residues 355–375 (IELAGGLGAIFLLLVLLVVIY) traverse the membrane as a helical segment. At 376 to 686 (KCYNIELMLF…KELSFTSDIW (311 aa)) the chain is on the cytoplasmic side. In terms of domain architecture, TIR spans 400-556 (KEYDAYLSYT…KFWKHLVYEM (157 aa)). The active site involves glutamate 488.

The protein belongs to the interleukin-1 receptor family. Detected at low levels in fetal and adult brain, in particular in the frontal lobe, temporal lobe and cerebellum. Detected at very low levels in skin, liver, fetal ovary and in placenta.

It localises to the membrane. It carries out the reaction NAD(+) + H2O = ADP-D-ribose + nicotinamide + H(+). The chain is X-linked interleukin-1 receptor accessory protein-like 2 (IL1RAPL2) from Homo sapiens (Human).